The sequence spans 300 residues: MTEFHSGFVCLVGRPNTGKSTLTNALVGAKVAITSTRPQTTRHAIRGIVHSDDFQIILVDTPGLHRPRTLLGKRLNDLVRETYAAVDVIGLCIPADEAIGPGDRWIVEQLRSTGPANTTLVVIVTKIDKVPKEKVVAQLVAVSELVTNAAEIVPVSAMTGDRVDLLIDVLAAALPAGPAYYPDGELTDEPEEVLMAELIREAALQGVRDELPHSLAVVIDEVSPREGRDDLIDVHAALYVERDSQKGIVIGKGGARLREVGTAARSQIENLLGTKVYLDLRVKVAKNWQRDPKQLGRLGF.

The 172-residue stretch at 5–176 folds into the Era-type G domain; it reads HSGFVCLVGR…IDVLAAALPA (172 aa). Residues 13-20 form a G1 region; it reads GRPNTGKS. A GTP-binding site is contributed by 13 to 20; that stretch reads GRPNTGKS. Positions 39-43 are G2; the sequence is QTTRH. A G3 region spans residues 60–63; the sequence is DTPG. GTP-binding positions include 60-64 and 125-128; these read DTPGL and TKID. Residues 125 to 128 are G4; sequence TKID. The G5 stretch occupies residues 155-157; the sequence is VSA. Residues 207-286 enclose the KH type-2 domain; sequence VRDELPHSLA…YLDLRVKVAK (80 aa).

It belongs to the TRAFAC class TrmE-Era-EngA-EngB-Septin-like GTPase superfamily. Era GTPase family. Monomer.

It is found in the cell envelope. Its subcellular location is the secreted. The protein resides in the cell wall. Its function is as follows. Exhibits GTPase activity. Binds RNA but is probably not involved in ribosome assembly in mycobacteria. This Mycobacterium bovis (strain ATCC BAA-935 / AF2122/97) protein is GTPase Era.